The sequence spans 318 residues: Sensor histidine kinase NatK (318 aa).

Transmembrane regions (helical) follow at residues 4–24 (LFQC…AAAF), 27–47 (STAA…LYIW), and 72–82 (VGVVLIGTDIM). In terms of domain architecture, Histidine kinase spans 132–318 (RNHDTMKHIT…RLEIKIPFQK (187 aa)). Residue H134 is modified to Phosphohistidine; by autocatalysis.

Its subcellular location is the cell membrane. It catalyses the reaction ATP + protein L-histidine = ADP + protein N-phospho-L-histidine.. Member of the two-component regulatory system NatK/NatR that positively regulates the expression of the natAB operon. Potentially phosphorylates NatR. The polypeptide is Sensor histidine kinase NatK (Bacillus subtilis (strain 168)).